A 156-amino-acid polypeptide reads, in one-letter code: Protein-export protein SecB (156 aa).

The protein belongs to the SecB family. As to quaternary structure, homotetramer, a dimer of dimers. One homotetramer interacts with 1 SecA dimer.

The protein resides in the cytoplasm. One of the proteins required for the normal export of preproteins out of the cell cytoplasm. It is a molecular chaperone that binds to a subset of precursor proteins, maintaining them in a translocation-competent state. It also specifically binds to its receptor SecA. This Xanthobacter autotrophicus (strain ATCC BAA-1158 / Py2) protein is Protein-export protein SecB.